The primary structure comprises 178 residues: Photosystem II extrinsic protein V (178 aa).

The signal sequence occupies residues 1–38 (MFSKFFSLQKAFAAARRRLLILILVLGMAGYAWGPALA). Cys71, Cys74, His75, and His126 together coordinate heme c.

The protein belongs to the cytochrome c family. PsbV subfamily. PSII is composed of 1 copy each of membrane proteins PsbA, PsbB, PsbC, PsbD, PsbE, PsbF, PsbH, PsbI, PsbJ, PsbK, PsbL, PsbM, PsbT, PsbX, PsbY, PsbZ, Psb30/Ycf12, peripheral proteins PsbO, CyanoQ (PsbQ), PsbU, PsbV and a large number of cofactors. It forms dimeric complexes. Requires heme c as cofactor.

It localises to the cellular thylakoid membrane. One of the extrinsic, lumenal subunits of photosystem II (PSII). PSII is a light-driven water plastoquinone oxidoreductase, using light energy to abstract electrons from H(2)O, generating a proton gradient subsequently used for ATP formation. The extrinsic proteins stabilize the structure of photosystem II oxygen-evolving complex (OEC), the ion environment of oxygen evolution and protect the OEC against heat-induced inactivation. Low-potential cytochrome c that plays a role in the OEC of PSII. In Synechococcus sp. (strain JA-3-3Ab) (Cyanobacteria bacterium Yellowstone A-Prime), this protein is Photosystem II extrinsic protein V.